Here is a 396-residue protein sequence, read N- to C-terminus: Elongation factor Tu 2 (396 aa).

Residues 10–206 (KPHCNVGTIG…AVDDYIPQPE (197 aa)) enclose the tr-type G domain. The G1 stretch occupies residues 19–26 (GHVDHGKT). Residue 19 to 26 (GHVDHGKT) coordinates GTP. Thr26 provides a ligand contact to Mg(2+). Residues 60–64 (GITIS) are G2. The tract at residues 81–84 (DCPG) is G3. GTP contacts are provided by residues 81-85 (DCPGH) and 136-139 (NKCD). Residues 136–139 (NKCD) are G4. The segment at 174 to 176 (SAL) is G5.

Belongs to the TRAFAC class translation factor GTPase superfamily. Classic translation factor GTPase family. EF-Tu/EF-1A subfamily. Monomer.

It is found in the cytoplasm. It carries out the reaction GTP + H2O = GDP + phosphate + H(+). Functionally, GTP hydrolase that promotes the GTP-dependent binding of aminoacyl-tRNA to the A-site of ribosomes during protein biosynthesis. The protein is Elongation factor Tu 2 of Rhodospirillum rubrum (strain ATCC 11170 / ATH 1.1.1 / DSM 467 / LMG 4362 / NCIMB 8255 / S1).